The sequence spans 216 residues: Peptide methionine sulfoxide reductase MsrA (216 aa).

The active site involves Cys54.

The protein belongs to the MsrA Met sulfoxide reductase family.

The enzyme catalyses L-methionyl-[protein] + [thioredoxin]-disulfide + H2O = L-methionyl-(S)-S-oxide-[protein] + [thioredoxin]-dithiol. The catalysed reaction is [thioredoxin]-disulfide + L-methionine + H2O = L-methionine (S)-S-oxide + [thioredoxin]-dithiol. Its function is as follows. Has an important function as a repair enzyme for proteins that have been inactivated by oxidation. Catalyzes the reversible oxidation-reduction of methionine sulfoxide in proteins to methionine. This Xylella fastidiosa (strain Temecula1 / ATCC 700964) protein is Peptide methionine sulfoxide reductase MsrA.